The chain runs to 362 residues: MKKMTITLGPRNYPITISSGLLNHFDSFEPLKKGDQGMLVTNQTLAPLYLSSIRTVLEQGGVRLDHIILPDGEKYKSLASIELIFTELLKKWHGRHTTLIAFGGGVIGDLTGFAAACYQRGIRYIQIPTTLLAQVDASIGGKTAVNHQLGKNMIGAFYQPASVIIDIDCLSHLPLRHFSSGLAEAIKYGIAFDFDFFCWLEANMDSLLRRDVDALSHCISRCCQIKSKIVMEDERDENGLRALLNLGHTYAHAIETETNYIFYLHGEAVSIGMLMAAQTAQKLGLFSKTDIIRIKKLLLRAKLPIQGFHQIDPKSCLLHMMHDKKVMNDKLRLIIPTAIGQSEIYEGIDNDIVLASIKETLM.

Residues 71–76, 105–109, 129–130, Lys142, and Lys151 contribute to the NAD(+) site; these read DGEKYK, GVIGD, and TT. 3 residues coordinate Zn(2+): Glu184, His248, and His265.

The protein belongs to the sugar phosphate cyclases superfamily. Dehydroquinate synthase family. Requires Co(2+) as cofactor. Zn(2+) is required as a cofactor. The cofactor is NAD(+).

It is found in the cytoplasm. It catalyses the reaction 7-phospho-2-dehydro-3-deoxy-D-arabino-heptonate = 3-dehydroquinate + phosphate. The protein operates within metabolic intermediate biosynthesis; chorismate biosynthesis; chorismate from D-erythrose 4-phosphate and phosphoenolpyruvate: step 2/7. Functionally, catalyzes the conversion of 3-deoxy-D-arabino-heptulosonate 7-phosphate (DAHP) to dehydroquinate (DHQ). This Hamiltonella defensa subsp. Acyrthosiphon pisum (strain 5AT) protein is 3-dehydroquinate synthase.